Here is a 469-residue protein sequence, read N- to C-terminus: Threonine synthase (469 aa).

K112 carries the N6-(pyridoxal phosphate)lysine modification.

It belongs to the threonine synthase family. Requires pyridoxal 5'-phosphate as cofactor.

The enzyme catalyses O-phospho-L-homoserine + H2O = L-threonine + phosphate. Its pathway is amino-acid biosynthesis; L-threonine biosynthesis; L-threonine from L-aspartate: step 5/5. In terms of biological role, catalyzes the gamma-elimination of phosphate from L-phosphohomoserine and the beta-addition of water to produce L-threonine. This chain is Threonine synthase (thrC), found in Pseudomonas aeruginosa (strain ATCC 15692 / DSM 22644 / CIP 104116 / JCM 14847 / LMG 12228 / 1C / PRS 101 / PAO1).